Here is a 653-residue protein sequence, read N- to C-terminus: Large subunit GTPase 1 homolog (653 aa).

A disordered region spans residues 1-47 (MGKKRGTGLGRSLQRQRGSERRGASSWLHASEVVGESGPERRSAVEQ). The 285-residue stretch at 155–439 (WRQLWRVIER…LCDCPGLVMP (285 aa)) folds into the CP-type G domain. 203 to 206 (NKAD) is a GTP binding site. Residues 248 to 275 (ADSVADDLSDSEEESSSQEEDVTAEDSA) show a composition bias toward acidic residues. The segment at 248–323 (ADSVADDLSD…TCSEDEGGDK (76 aa)) is disordered. Residues 276 to 291 (ESTSTGSALQTENQCL) show a composition bias toward polar residues. Positions 293 to 320 (SDDDSSDEYEDCEDEEEDDWQTCSEDEG) are enriched in acidic residues. GTP contacts are provided by residues 388 to 395 (GYPNVGKS) and 432 to 435 (DCPG). A disordered region spans residues 621–653 (APSAGSVVGKPWKKHGNRNKKEKVRRITKHLEN). A compositionally biased stretch (basic residues) spans 631–653 (PWKKHGNRNKKEKVRRITKHLEN).

This sequence belongs to the TRAFAC class YlqF/YawG GTPase family. LSG1 subfamily.

It localises to the cytoplasm. The protein localises to the endoplasmic reticulum. It is found in the nucleus. The protein resides in the cajal body. It carries out the reaction GTP + H2O = GDP + phosphate + H(+). In terms of biological role, GTPase required for the XPO1/CRM1-mediated nuclear export of the 60S ribosomal subunit. Probably acts by mediating the release of NMD3 from the 60S ribosomal subunit after export into the cytoplasm. Functions as a GTPase. May act by mediating the release of NMD3 from the 60S ribosomal subunit after export into the cytoplasm during the 60S ribosomal subunit maturation. The protein is Large subunit GTPase 1 homolog of Gallus gallus (Chicken).